The sequence spans 321 residues: 37 kDa cell surface protein (321 aa).

It localises to the secreted. Its subcellular location is the cell wall. In Candida albicans (Yeast), this protein is 37 kDa cell surface protein (CSP37).